Consider the following 496-residue polypeptide: Squalene epoxidase ERG1 (496 aa).

A helical membrane pass occupies residues 4 to 24; sequence VKYDAIIIGAGVIGPTIATAF. FAD-binding positions include 15–16, 35–36, arginine 43, arginine 148, valine 164, aspartate 332, and methionine 345; these read VI and ER. Transmembrane regions (helical) follow at residues 431–451 and 466–486; these read IGLL…FFSV and LGFP…IVIF.

It belongs to the squalene monooxygenase family. FAD is required as a cofactor.

The protein localises to the microsome membrane. The protein resides in the endoplasmic reticulum membrane. The enzyme catalyses squalene + reduced [NADPH--hemoprotein reductase] + O2 = (S)-2,3-epoxysqualene + oxidized [NADPH--hemoprotein reductase] + H2O + H(+). It functions in the pathway terpene metabolism; lanosterol biosynthesis; lanosterol from farnesyl diphosphate: step 2/3. Activity is completely abolished by Triton X-100, deoxycholate or Cu(2+), and partially inhibited by thiol reagents, rotenone and antimycin A. The allylamine antimycotic agents naftifine and SF 86-327are potent inhibitors and show apparently non-competitive kinetics with respect to the substrate squalene. Functionally, squalene epoxidase; part of the third module of ergosterol biosynthesis pathway that includes the late steps of the pathway. Erg1 catalyzes the epoxidation of squalene into 2,3-epoxysqualene. The third module or late pathway involves the ergosterol synthesis itself through consecutive reactions that mainly occur in the endoplasmic reticulum (ER) membrane. Firstly, the squalene synthase ERG9 catalyzes the condensation of 2 farnesyl pyrophosphate moieties to form squalene, which is the precursor of all steroids. Squalene synthase is crucial for balancing the incorporation of farnesyl diphosphate (FPP) into sterol and nonsterol isoprene synthesis. Secondly, the squalene epoxidase ERG1 catalyzes the stereospecific oxidation of squalene to (S)-2,3-epoxysqualene, which is considered to be a rate-limiting enzyme in steroid biosynthesis. Then, the lanosterol synthase ERG7 catalyzes the cyclization of (S)-2,3 oxidosqualene to lanosterol, a reaction that forms the sterol core. In the next steps, lanosterol is transformed to zymosterol through a complex process involving various demethylation, reduction and desaturation reactions. The lanosterol 14-alpha-demethylase ERG11 (also known as CYP51) catalyzes C14-demethylation of lanosterol to produce 4,4'-dimethyl cholesta-8,14,24-triene-3-beta-ol, which is critical for ergosterol biosynthesis. The C-14 reductase ERG24 reduces the C14=C15 double bond of 4,4-dimethyl-cholesta-8,14,24-trienol to produce 4,4-dimethyl-cholesta-8,24-dienol. 4,4-dimethyl-cholesta-8,24-dienol is substrate of the C-4 demethylation complex ERG25-ERG26-ERG27 in which ERG25 catalyzes the three-step monooxygenation required for the demethylation of 4,4-dimethyl and 4alpha-methylsterols, ERG26 catalyzes the oxidative decarboxylation that results in a reduction of the 3-beta-hydroxy group at the C-3 carbon to an oxo group, and ERG27 is responsible for the reduction of the keto group on the C-3. ERG28 has a role as a scaffold to help anchor ERG25, ERG26 and ERG27 to the endoplasmic reticulum and ERG29 regulates the activity of the iron-containing C4-methylsterol oxidase ERG25. Then, the sterol 24-C-methyltransferase ERG6 catalyzes the methyl transfer from S-adenosyl-methionine to the C-24 of zymosterol to form fecosterol. The C-8 sterol isomerase ERG2 catalyzes the reaction which results in unsaturation at C-7 in the B ring of sterols and thus converts fecosterol to episterol. The sterol-C5-desaturase ERG3 then catalyzes the introduction of a C-5 double bond in the B ring to produce 5-dehydroepisterol. The C-22 sterol desaturase ERG5 further converts 5-dehydroepisterol into ergosta-5,7,22,24(28)-tetraen-3beta-ol by forming the C-22(23) double bond in the sterol side chain. Finally, ergosta-5,7,22,24(28)-tetraen-3beta-ol is substrate of the C-24(28) sterol reductase ERG4 to produce ergosterol. The polypeptide is Squalene epoxidase ERG1 (Candida albicans (strain SC5314 / ATCC MYA-2876) (Yeast)).